A 295-amino-acid chain; its full sequence is Pyrroline-5-carboxylate reductase (295 aa).

It belongs to the pyrroline-5-carboxylate reductase family.

It localises to the cytoplasm. It carries out the reaction L-proline + NADP(+) = (S)-1-pyrroline-5-carboxylate + NADPH + 2 H(+). The catalysed reaction is L-proline + NAD(+) = (S)-1-pyrroline-5-carboxylate + NADH + 2 H(+). It functions in the pathway amino-acid biosynthesis; L-proline biosynthesis; L-proline from L-glutamate 5-semialdehyde: step 1/1. Functionally, catalyzes the reduction of 1-pyrroline-5-carboxylate (PCA) to L-proline. The protein is Pyrroline-5-carboxylate reductase of Mycobacterium tuberculosis (strain CDC 1551 / Oshkosh).